Consider the following 172-residue polypeptide: Protein YdeJ (172 aa).

Belongs to the CinA family.

In terms of biological role, does not have nicotinamide-nucleotide (NMN) amidohydrolase activity. The polypeptide is Protein YdeJ (ydeJ) (Escherichia coli (strain K12)).